We begin with the raw amino-acid sequence, 431 residues long: Glucose-1-phosphate adenylyltransferase (431 aa).

Residue Lys-39 coordinates beta-D-fructose 1,6-bisphosphate. 3 residues coordinate AMP: Arg-40, His-46, and Arg-52. An alpha-D-glucose 1-phosphate-binding site is contributed by Tyr-114. Arg-130 is an AMP binding site. Alpha-D-glucose 1-phosphate is bound by residues Gly-179, 194–195 (EK), and Ser-212. Positions 370 and 386 each coordinate AMP. Residues 419–423 (REMLR) and 429–431 (QER) contribute to the beta-D-fructose 1,6-bisphosphate site.

It belongs to the bacterial/plant glucose-1-phosphate adenylyltransferase family. Homotetramer.

It catalyses the reaction alpha-D-glucose 1-phosphate + ATP + H(+) = ADP-alpha-D-glucose + diphosphate. It participates in glycan biosynthesis; glycogen biosynthesis. Its activity is regulated as follows. Allosterically activated by fructose-1,6-bisphosphate (F16BP) and inhibited by AMP. In terms of biological role, involved in the biosynthesis of ADP-glucose, a building block required for the elongation reactions to produce glycogen. Catalyzes the reaction between ATP and alpha-D-glucose 1-phosphate (G1P) to produce pyrophosphate and ADP-Glc. This chain is Glucose-1-phosphate adenylyltransferase, found in Escherichia coli O7:K1 (strain IAI39 / ExPEC).